We begin with the raw amino-acid sequence, 478 residues long: Proline--tRNA ligase (478 aa).

Belongs to the class-II aminoacyl-tRNA synthetase family. ProS type 3 subfamily. As to quaternary structure, homodimer.

It is found in the cytoplasm. It catalyses the reaction tRNA(Pro) + L-proline + ATP = L-prolyl-tRNA(Pro) + AMP + diphosphate. In terms of biological role, catalyzes the attachment of proline to tRNA(Pro) in a two-step reaction: proline is first activated by ATP to form Pro-AMP and then transferred to the acceptor end of tRNA(Pro). The sequence is that of Proline--tRNA ligase from Oceanobacillus iheyensis (strain DSM 14371 / CIP 107618 / JCM 11309 / KCTC 3954 / HTE831).